An 809-amino-acid chain; its full sequence is Sucrose synthase 2 (809 aa).

The segment at 278–756 is GT-B glycosyltransferase; the sequence is MVFNVVILSP…GLQRIYERYT (479 aa).

This sequence belongs to the glycosyltransferase 1 family. Plant sucrose synthase subfamily.

The enzyme catalyses an NDP-alpha-D-glucose + D-fructose = a ribonucleoside 5'-diphosphate + sucrose + H(+). Sucrose-cleaving enzyme that provides UDP-glucose and fructose for various metabolic pathways. In Pisum sativum (Garden pea), this protein is Sucrose synthase 2 (SUS2).